Reading from the N-terminus, the 219-residue chain is Chloramphenicol acetyltransferase (219 aa).

Catalysis depends on His190, which acts as the Proton acceptor.

It belongs to the chloramphenicol acetyltransferase family. As to quaternary structure, homotrimer.

It catalyses the reaction chloramphenicol + acetyl-CoA = chloramphenicol 3-acetate + CoA. Functionally, this enzyme is an effector of chloramphenicol resistance in bacteria. In Clostridium butyricum, this protein is Chloramphenicol acetyltransferase (catB).